The sequence spans 459 residues: Putrescine aminotransferase (459 aa).

Residues 150-151 (GT) and Gln-274 contribute to the pyridoxal 5'-phosphate site. Lys-300 is subject to N6-(pyridoxal phosphate)lysine. Thr-332 is a binding site for pyridoxal 5'-phosphate.

It belongs to the class-III pyridoxal-phosphate-dependent aminotransferase family. Putrescine aminotransferase subfamily. It depends on pyridoxal 5'-phosphate as a cofactor.

It catalyses the reaction an alkane-alpha,omega-diamine + 2-oxoglutarate = an omega-aminoaldehyde + L-glutamate. The catalysed reaction is putrescine + 2-oxoglutarate = 1-pyrroline + L-glutamate + H2O. The enzyme catalyses cadaverine + 2-oxoglutarate = 5-aminopentanal + L-glutamate. The protein operates within amine and polyamine degradation; putrescine degradation; 4-aminobutanal from putrescine (transaminase route): step 1/1. Functionally, catalyzes the aminotransferase reaction from putrescine to 2-oxoglutarate, leading to glutamate and 4-aminobutanal, which spontaneously cyclizes to form 1-pyrroline. This is the first step in one of two pathways for putrescine degradation, where putrescine is converted into 4-aminobutanoate (gamma-aminobutyrate or GABA) via 4-aminobutanal. Also functions as a cadaverine transaminase in a a L-lysine degradation pathway to succinate that proceeds via cadaverine, glutarate and L-2-hydroxyglutarate. The chain is Putrescine aminotransferase from Escherichia coli O8 (strain IAI1).